Consider the following 151-residue polypeptide: Large ribosomal subunit protein bL9 (151 aa).

This sequence belongs to the bacterial ribosomal protein bL9 family.

Functionally, binds to the 23S rRNA. This chain is Large ribosomal subunit protein bL9, found in Nitrosococcus oceani (strain ATCC 19707 / BCRC 17464 / JCM 30415 / NCIMB 11848 / C-107).